A 354-amino-acid polypeptide reads, in one-letter code: S-adenosylmethionine:tRNA ribosyltransferase-isomerase (354 aa).

This sequence belongs to the QueA family. As to quaternary structure, monomer.

The protein localises to the cytoplasm. It carries out the reaction 7-aminomethyl-7-carbaguanosine(34) in tRNA + S-adenosyl-L-methionine = epoxyqueuosine(34) in tRNA + adenine + L-methionine + 2 H(+). The protein operates within tRNA modification; tRNA-queuosine biosynthesis. Its function is as follows. Transfers and isomerizes the ribose moiety from AdoMet to the 7-aminomethyl group of 7-deazaguanine (preQ1-tRNA) to give epoxyqueuosine (oQ-tRNA). The protein is S-adenosylmethionine:tRNA ribosyltransferase-isomerase of Salmonella gallinarum (strain 287/91 / NCTC 13346).